Here is a 726-residue protein sequence, read N- to C-terminus: Catalase-peroxidase (726 aa).

The disordered stretch occupies residues 1–33 (MSTSDDIHNTTATGKCPFHQGGHDQSAGAGTTT). The tryptophyl-tyrosyl-methioninium (Trp-Tyr) (with M-252) cross-link spans 105 to 226 (WHGAGTYRSI…LGATEMGLIY (122 aa)). Residue His106 is the Proton acceptor of the active site. A cross-link (tryptophyl-tyrosyl-methioninium (Tyr-Met) (with W-105)) is located at residues 226 to 252 (YVNPEGPDHSGEPLSAAAAIRATFGNM). His267 is a binding site for heme b.

The protein belongs to the peroxidase family. Peroxidase/catalase subfamily. In terms of assembly, homodimer or homotetramer. It depends on heme b as a cofactor. Formation of the three residue Trp-Tyr-Met cross-link is important for the catalase, but not the peroxidase activity of the enzyme.

The catalysed reaction is H2O2 + AH2 = A + 2 H2O. The enzyme catalyses 2 H2O2 = O2 + 2 H2O. Bifunctional enzyme with both catalase and broad-spectrum peroxidase activity. This chain is Catalase-peroxidase, found in Shigella boydii serotype 18 (strain CDC 3083-94 / BS512).